Here is a 262-residue protein sequence, read N- to C-terminus: Phenylalanine-4-hydroxylase (262 aa).

The Fe cation site is built by histidine 121, histidine 126, and glutamate 166.

It belongs to the biopterin-dependent aromatic amino acid hydroxylase family. In terms of assembly, monomer. Fe(2+) is required as a cofactor.

It catalyses the reaction (6R)-L-erythro-5,6,7,8-tetrahydrobiopterin + L-phenylalanine + O2 = (4aS,6R)-4a-hydroxy-L-erythro-5,6,7,8-tetrahydrobiopterin + L-tyrosine. It functions in the pathway amino-acid degradation; L-phenylalanine degradation; acetoacetate and fumarate from L-phenylalanine: step 1/6. This Pseudomonas aeruginosa (strain ATCC 15692 / DSM 22644 / CIP 104116 / JCM 14847 / LMG 12228 / 1C / PRS 101 / PAO1) protein is Phenylalanine-4-hydroxylase (phhA).